Here is a 1941-residue protein sequence, read N- to C-terminus: Diacylglycerol kinase eta (1941 aa).

Residues 93 to 186 (SIIKEGYLLK…WLGSLKAATA (94 aa)) form the PH domain. Phorbol-ester/DAG-type zinc fingers lie at residues 206–256 (HHHW…IANC) and 279–330 (PHQW…AIAC). Positions 361–497 (GNFSPLLVFV…DRWSIMVFEK (137 aa)) constitute a DAGKc domain. 4 disordered regions span residues 1030–1068 (TTTL…SPPR), 1132–1164 (CNSN…ETPT), 1215–1257 (LESA…PSSS), and 1276–1295 (RRHS…KDKD). The segment covering 1133–1155 (NSNNNSNNNSNSNSNNNNHNDGN) has biased composition (low complexity). Positions 1878–1941 (WSVNEVVTWL…LQAIKDLSEN (64 aa)) constitute an SAM domain.

It belongs to the eukaryotic diacylglycerol kinase family.

The protein resides in the cytoplasm. It catalyses the reaction a 1,2-diacyl-sn-glycerol + ATP = a 1,2-diacyl-sn-glycero-3-phosphate + ADP + H(+). In terms of biological role, phosphorylates diacylglycerol (DAG) to generate phosphatidic acid (PA). The polypeptide is Diacylglycerol kinase eta (Drosophila grimshawi (Hawaiian fruit fly)).